A 560-amino-acid chain; its full sequence is DNA ligase B (560 aa).

Residue Lys-124 is the N6-AMP-lysine intermediate of the active site.

Belongs to the NAD-dependent DNA ligase family. LigB subfamily.

The catalysed reaction is NAD(+) + (deoxyribonucleotide)n-3'-hydroxyl + 5'-phospho-(deoxyribonucleotide)m = (deoxyribonucleotide)n+m + AMP + beta-nicotinamide D-nucleotide.. Its function is as follows. Catalyzes the formation of phosphodiester linkages between 5'-phosphoryl and 3'-hydroxyl groups in double-stranded DNA using NAD as a coenzyme and as the energy source for the reaction. In Escherichia coli O81 (strain ED1a), this protein is DNA ligase B.